The following is a 387-amino-acid chain: tRNA pseudouridine synthase B (387 aa).

Aspartate 43 acts as the Nucleophile in catalysis.

It belongs to the pseudouridine synthase TruB family. Type 1 subfamily.

It catalyses the reaction uridine(55) in tRNA = pseudouridine(55) in tRNA. Its function is as follows. Responsible for synthesis of pseudouridine from uracil-55 in the psi GC loop of transfer RNAs. The sequence is that of tRNA pseudouridine synthase B from Bifidobacterium longum (strain DJO10A).